The chain runs to 56 residues: Ovomucoid (56 aa).

Residues 6-56 form the Kazal-like domain; that stretch reads VDCSDHPKPACLQEQKPLCGSDNKTYDNKCSFCNAVVDSNGTLTLSHFGKC. 3 disulfide bridges follow: C8–C38, C16–C35, and C24–C56. N45 carries an N-linked (GlcNAc...) asparagine glycan.

It is found in the secreted. The protein is Ovomucoid of Pipile pipile (Trinidad piping guan).